The following is a 99-amino-acid chain: Putative GIY-YIG domain-containing protein 242L (99 aa).

The 77-residue stretch at 5–81 folds into the GIY-YIG domain; the sequence is NGWNIYMVTM…KKQTKKVKLQ (77 aa).

In Invertebrate iridescent virus 6 (IIV-6), this protein is Putative GIY-YIG domain-containing protein 242L.